Here is a 320-residue protein sequence, read N- to C-terminus: ATP-dependent 6-phosphofructokinase (320 aa).

Gly-12 is an ATP binding site. ADP-binding positions include 22–26 and 55–60; these read RGVVR and RYSVSD. ATP contacts are provided by residues 73-74 and 103-106; these read RF and GDGS. Asp-104 is a Mg(2+) binding site. 126–128 provides a ligand contact to substrate; the sequence is TID. Asp-128 functions as the Proton acceptor in the catalytic mechanism. Arg-155 contributes to the ADP binding site. Substrate contacts are provided by residues Arg-163 and 170–172; that span reads MGR. ADP contacts are provided by residues 186–188, Lys-212, and 214–216; these read GCE and KKH. Residues Glu-223, Arg-244, and 250–253 contribute to the substrate site; that span reads HIQR.

This sequence belongs to the phosphofructokinase type A (PFKA) family. ATP-dependent PFK group I subfamily. Prokaryotic clade 'B1' sub-subfamily. As to quaternary structure, homotetramer. Mg(2+) is required as a cofactor.

The protein resides in the cytoplasm. The catalysed reaction is beta-D-fructose 6-phosphate + ATP = beta-D-fructose 1,6-bisphosphate + ADP + H(+). The protein operates within carbohydrate degradation; glycolysis; D-glyceraldehyde 3-phosphate and glycerone phosphate from D-glucose: step 3/4. Its activity is regulated as follows. Allosterically activated by ADP and other diphosphonucleosides, and allosterically inhibited by phosphoenolpyruvate. Its function is as follows. Catalyzes the phosphorylation of D-fructose 6-phosphate to fructose 1,6-bisphosphate by ATP, the first committing step of glycolysis. This chain is ATP-dependent 6-phosphofructokinase, found in Citrobacter koseri (strain ATCC BAA-895 / CDC 4225-83 / SGSC4696).